The chain runs to 200 residues: Putative 3-methyladenine DNA glycosylase (200 aa).

This sequence belongs to the DNA glycosylase MPG family.

The protein is Putative 3-methyladenine DNA glycosylase of Shouchella clausii (strain KSM-K16) (Alkalihalobacillus clausii).